We begin with the raw amino-acid sequence, 147 residues long: Large ribosomal subunit protein bL9 (147 aa).

It belongs to the bacterial ribosomal protein bL9 family.

Functionally, binds to the 23S rRNA. This chain is Large ribosomal subunit protein bL9, found in Halothermothrix orenii (strain H 168 / OCM 544 / DSM 9562).